The following is a 64-amino-acid chain: Mitotic-spindle organizing protein 1 (64 aa).

Belongs to the MOZART1 family. In terms of assembly, part of the gamma-tubulin complex. Interacts directly with alp6/GPC3.

Its subcellular location is the cytoplasm. The protein localises to the cytoskeleton. It localises to the microtubule organizing center. The protein resides in the spindle pole body. Required for gamma-tubulin complex recruitment to the microtubule organizing center (MTOC). The sequence is that of Mitotic-spindle organizing protein 1 (mzt1) from Schizosaccharomyces pombe (strain 972 / ATCC 24843) (Fission yeast).